A 766-amino-acid polypeptide reads, in one-letter code: ABC-type oligopeptide transporter ABCB9 (766 aa).

8 helical membrane-spanning segments follow: residues 7 to 27 (VVVT…IYVF), 47 to 67 (VLDL…ATIG), 84 to 104 (LVIT…LLLF), 116 to 136 (FWAL…LWWL), 185 to 205 (VAFL…ETFL), 225 to 245 (FSTA…AAGI), 319 to 339 (VFMF…FPII), and 416 to 436 (SGLT…HLVI). The 284-residue stretch at 188–471 (LVAASFFLIV…VGSVYSGLMQ (284 aa)) folds into the ABC transmembrane type-1 domain. The ABC transporter domain maps to 504-740 (VDFENVTFTY…GGLYAKLVQR (237 aa)). 539–546 (GPSGSGKS) is a binding site for ATP.

The protein belongs to the ABC transporter superfamily. ABCB family. MHC peptide exporter (TC 3.A.1.209) subfamily. Homodimer. Interacts (via TMD0 region) with LAMP1; this interaction strongly stabilizes ABCB9 and protects ABCB9 against lysosomal degradation. Interacts (via TMD0 region) with LAMP2 (isoform LAMP-2B). Interacts (via TMD0) with YIF1B; this interaction allows (but is not essential) the ER-to-Golgi trafficking and strongly depends on a salt bridge within TMD0. In terms of tissue distribution, highly expressed in testis, and at moderate levels in brain, spinal cord, and thyroid. Not expressed in monocytes but strongly expressed during differentiation of monocytes to dendritic cells and macrophages.

It localises to the lysosome membrane. It carries out the reaction a [oligopeptide](in) + ATP + H2O = a [oligopeptide](out) + ADP + phosphate + H(+). Transport activity is limited by threshold levels of luminal peptide. ATP hydrolysis is reduced in the presence of the spatial challenging 18-mer peptide by 50% and the branched 16-mer peptide by 75%. Transport rate of the longer peptides is strongly reduced. ATP-dependent low-affinity peptide transporter which translocates a broad spectrum of peptides from the cytosol to the lysosomal lumen for degradation. Displays a broad peptide length specificity from 6-mer up to at least 59-mer peptides with an optimum of 23-mers. Binds and transports smaller and larger peptides with the same affinity. Favors positively charged, aromatic or hydrophobic residues in the N- and C-terminal positions whereas negatively charged residues as well as asparagine and methionine are not favored. The sequence is that of ABC-type oligopeptide transporter ABCB9 from Homo sapiens (Human).